The following is a 96-amino-acid chain: Cytochrome c-553 (96 aa).

An N-terminal signal peptide occupies residues Met1 to Ala19. The heme c site is built by Cys29, Cys32, His33, and Met73.

Belongs to the cytochrome c family. Post-translationally, binds 1 heme c group covalently per subunit.

The protein resides in the periplasm. Its function is as follows. Natural electron acceptor for a formate dehydrogenase. This is Cytochrome c-553 from Helicobacter pylori (strain ATCC 700392 / 26695) (Campylobacter pylori).